Reading from the N-terminus, the 300-residue chain is Actin-related protein 2/3 complex subunit 2 (300 aa).

Lys275 and Lys295 each carry N6-acetyllysine.

Belongs to the ARPC2 family. As to quaternary structure, component of the Arp2/3 complex composed of ACTR2/ARP2, ACTR3/ARP3, ARPC1B/p41-ARC, ARPC2/p34-ARC, ARPC3/p21-ARC, ARPC4/p20-ARC and ARPC5/p16-ARC. Interacts with SHANK3; the interaction probably mediates the association of SHANK3 with the Arp2/3 complex.

The protein resides in the cytoplasm. It localises to the cytoskeleton. Its subcellular location is the cell projection. The protein localises to the synapse. It is found in the synaptosome. The protein resides in the nucleus. Actin-binding component of the Arp2/3 complex, a multiprotein complex that mediates actin polymerization upon stimulation by nucleation-promoting factor (NPF). The Arp2/3 complex mediates the formation of branched actin networks in the cytoplasm, providing the force for cell motility. Seems to contact the mother actin filament. In addition to its role in the cytoplasmic cytoskeleton, the Arp2/3 complex also promotes actin polymerization in the nucleus, thereby regulating gene transcription and repair of damaged DNA. The Arp2/3 complex promotes homologous recombination (HR) repair in response to DNA damage by promoting nuclear actin polymerization, leading to drive motility of double-strand breaks (DSBs). In Rattus norvegicus (Rat), this protein is Actin-related protein 2/3 complex subunit 2.